The primary structure comprises 396 residues: Pectinesterase (396 aa).

Residues 1 to 21 form the signal peptide; that stretch reads MQSKTLYLKATALLGGCTVFA. Residue threonine 174 coordinates substrate. Aspartate 232 functions as the Proton donor in the catalytic mechanism. The active-site Nucleophile is the aspartate 259. Arginine 324 and tryptophan 326 together coordinate substrate.

The protein belongs to the pectinesterase family.

The protein localises to the secreted. It catalyses the reaction [(1-&gt;4)-alpha-D-galacturonosyl methyl ester](n) + n H2O = [(1-&gt;4)-alpha-D-galacturonosyl](n) + n methanol + n H(+). It participates in glycan metabolism; pectin degradation; 2-dehydro-3-deoxy-D-gluconate from pectin: step 1/5. Its function is as follows. Involved in maceration and soft-rotting of plant tissue. The sequence is that of Pectinesterase (pme) from Ralstonia nicotianae (strain ATCC BAA-1114 / GMI1000) (Ralstonia solanacearum).